The primary structure comprises 138 residues: Large ribosomal subunit protein bL17 (138 aa).

This sequence belongs to the bacterial ribosomal protein bL17 family. As to quaternary structure, part of the 50S ribosomal subunit. Contacts protein L32.

In Methylorubrum extorquens (strain PA1) (Methylobacterium extorquens), this protein is Large ribosomal subunit protein bL17.